Reading from the N-terminus, the 424-residue chain is 3-phosphoshikimate 1-carboxyvinyltransferase (424 aa).

3 residues coordinate 3-phosphoshikimate: K20, S21, and R25. Phosphoenolpyruvate is bound at residue K20. Phosphoenolpyruvate is bound by residues G92 and R120. The 3-phosphoshikimate site is built by S165, Q167, D313, and K340. Q167 contributes to the phosphoenolpyruvate binding site. The active-site Proton acceptor is D313. Residues R344 and R386 each coordinate phosphoenolpyruvate.

This sequence belongs to the EPSP synthase family. As to quaternary structure, monomer.

Its subcellular location is the cytoplasm. It catalyses the reaction 3-phosphoshikimate + phosphoenolpyruvate = 5-O-(1-carboxyvinyl)-3-phosphoshikimate + phosphate. It participates in metabolic intermediate biosynthesis; chorismate biosynthesis; chorismate from D-erythrose 4-phosphate and phosphoenolpyruvate: step 6/7. Functionally, catalyzes the transfer of the enolpyruvyl moiety of phosphoenolpyruvate (PEP) to the 5-hydroxyl of shikimate-3-phosphate (S3P) to produce enolpyruvyl shikimate-3-phosphate and inorganic phosphate. The polypeptide is 3-phosphoshikimate 1-carboxyvinyltransferase (Bacillus cytotoxicus (strain DSM 22905 / CIP 110041 / 391-98 / NVH 391-98)).